A 245-amino-acid chain; its full sequence is Uridylate kinase (245 aa).

12-15 (KISG) is an ATP binding site. Position 55 (Gly55) interacts with UMP. 2 residues coordinate ATP: Gly56 and Arg60. UMP-binding positions include Asp76 and 137–144 (AGAPYLTT). 3 residues coordinate ATP: Thr164, Tyr171, and Asp174.

It belongs to the UMP kinase family. As to quaternary structure, homohexamer.

Its subcellular location is the cytoplasm. The enzyme catalyses UMP + ATP = UDP + ADP. The protein operates within pyrimidine metabolism; CTP biosynthesis via de novo pathway; UDP from UMP (UMPK route): step 1/1. Its activity is regulated as follows. Inhibited by UTP. Functionally, catalyzes the reversible phosphorylation of UMP to UDP. The sequence is that of Uridylate kinase from Chlamydia trachomatis serovar D (strain ATCC VR-885 / DSM 19411 / UW-3/Cx).